Reading from the N-terminus, the 446-residue chain is Eukaryotic translation initiation factor 3 subunit E (446 aa).

Residues 256–425 form the PCI domain; the sequence is TDLFFSPAYI…GTVIMNHPPQ (170 aa).

It belongs to the eIF-3 subunit E family. Component of the eukaryotic translation initiation factor 3 (eIF-3) complex.

It is found in the cytoplasm. Functionally, component of the eukaryotic translation initiation factor 3 (eIF-3) complex, which is involved in protein synthesis of a specialized repertoire of mRNAs and, together with other initiation factors, stimulates binding of mRNA and methionyl-tRNAi to the 40S ribosome. The eIF-3 complex specifically targets and initiates translation of a subset of mRNAs involved in cell proliferation. In Aspergillus terreus (strain NIH 2624 / FGSC A1156), this protein is Eukaryotic translation initiation factor 3 subunit E (int6).